The following is a 181-amino-acid chain: Large ribosomal subunit protein uL6 (181 aa).

Belongs to the universal ribosomal protein uL6 family. Part of the 50S ribosomal subunit.

Functionally, this protein binds to the 23S rRNA, and is important in its secondary structure. It is located near the subunit interface in the base of the L7/L12 stalk, and near the tRNA binding site of the peptidyltransferase center. The chain is Large ribosomal subunit protein uL6 from Rhodopirellula baltica (strain DSM 10527 / NCIMB 13988 / SH1).